Consider the following 671-residue polypeptide: Huntingtin-associated protein 1 (671 aa).

Disordered stretches follow at residues 1–83 and 258–289; these read MRPK…ARRP and DSDEEDEDEEEEEEEKEAEEEQEEEEAEEDLQ. Residues 20-29 show a composition bias toward low complexity; it reads PAALTCAPSP. Residues 106–461 form the HAP1 N-terminal domain; sequence RFVFQGPFGS…EEVKTLRQQP (356 aa). The stretch at 212–427 forms a coiled coil; that stretch reads QSLVKQNSVL…IQMQLQEESV (216 aa). The segment covering 258-288 has biased composition (acidic residues); the sequence is DSDEEDEDEEEEEEEKEAEEEQEEEEAEEDL.

In terms of assembly, self-associates. Interacts with HTT/huntingtin; enhanced by an expanded polyglutamine repeat within HTT. Interacts with DCTN1; decreased in presence of HTT with expanded polyglutamine repeat. Interacts with KLC2. Interacts with ITPR1 and APP. Interacts with AR; decreased by an expanded polyglutamine repeat within AR. Interacts with YWHAZ. Interacts with BDNF and SORT1; probably forming a complex involved in proBDNF trafficking, degradation and processing. Interacts with TBP, AHI1, HGS and KALRN. Interacts with KIF5A, KIF5B, KIF5C and GABRB3; indicative for an HAP1:KIF5 complex transporting a GABA(A) receptor as cargo. Interacts with ATXN3; in STBs with ATXN3 poly-Gln region with 27 repeats (normal population) and 79 repeats (spinocerebellar ataxia 3 (SCA3) patients) associating in the same strength. Interacts with NTRK2; HAP1 stabilizes association of NTRK2 with SORT1 preventing NTRK2 degradation. Interacts with CFAP263. As to expression, predominantly expressed in brain. Selectively expressed in neurons.

It localises to the cytoplasm. The protein localises to the cell projection. Its subcellular location is the axon. The protein resides in the presynapse. It is found in the cytoskeleton. It localises to the dendritic spine. The protein localises to the dendrite. Its subcellular location is the lysosome. The protein resides in the endoplasmic reticulum. It is found in the mitochondrion. It localises to the nucleus. The protein localises to the cytoplasmic vesicle. Its subcellular location is the autophagosome. The protein resides in the early endosome. It is found in the growth cone. It localises to the neuron projection. The protein localises to the secretory vesicle. Its subcellular location is the synaptic vesicle. Originally identified as neuronal protein that specifically associates with HTT/huntingtin and the binding is enhanced by an expanded polyglutamine repeat within HTT possibly affecting HAP1 interaction properties. Both HTT and HAP1 are involved in intracellular trafficking and HAP1 is proposed to link HTT to motor proteins and/or transport cargos. Seems to play a role in vesicular transport within neurons and axons such as from early endosomes to late endocytic compartments and to promote neurite outgrowth. The vesicular transport function via association with microtubule-dependent transporters can be attenuated by association with mutant HTT. Involved in the axonal transport of BDNF and its activity-dependent secretion; the function seems to involve HTT, DCTN1 and a complex with SORT1. Involved in APP trafficking and seems to facilitate APP anterograde transport and membrane insertion thereby possibly reducing processing into amyloid beta. Involved in delivery of gamma-aminobutyric acid (GABA(A)) receptors to synapses; the function is dependent on kinesin motor protein KIF5 and is disrupted by HTT with expanded polyglutamine repeat. Involved in regulation of autophagosome motility by promoting efficient retrograde axonal transport. Seems to be involved in regulation of membrane receptor recycling and degradation, and respective signal transduction, including GABA(A) receptors, tyrosine kinase receptors, EGFR, IP3 receptor and androgen receptor. Among others suggested to be involved in control of feeding behavior (involving hypothalamic GABA(A) receptors), cerebellar and brainstem development (involving AHI1 and NTRK1/TrkA), postnatal neurogenesis (involving hypothalamic NTRK2/TrkB), and ITPR1/InsP3R1-mediated Ca(2+) release (involving HTT and possibly the effect of mutant HTT). Via association with DCTN1/dynactin p150-glued and HTT/huntingtin involved in cytoplasmic retention of REST in neurons. May be involved in ciliogenesis. Involved in regulation of exocytosis. Seems to be involved in formation of cytoplasmic inclusion bodies (STBs). In case of anomalous expression of TBP, can sequester a subset of TBP into STBs; sequestration is enhanced by an expanded polyglutamine repeat within TBP. HAP1-containing STBs have been proposed to play a protective role against neurodegeneration in Huntigton disease (HD) and spinocerebellar ataxia 17 (SCA17). The sequence is that of Huntingtin-associated protein 1 (HAP1) from Homo sapiens (Human).